Consider the following 509-residue polypeptide: Heat shock 70 kDa protein 14 (509 aa).

This sequence belongs to the heat shock protein 70 family. In terms of assembly, component of ribosome-associated complex (RAC), a heterodimer composed of Hsp70/DnaK-type chaperone HSPA14 and Hsp40/DnaJ-type chaperone DNAJC2.

It is found in the cytoplasm. The protein localises to the cytosol. Its function is as follows. Component of the ribosome-associated complex (RAC), a complex involved in folding or maintaining nascent polypeptides in a folding-competent state. In the RAC complex, binds to the nascent polypeptide chain, while DNAJC2 stimulates its ATPase activity. This chain is Heat shock 70 kDa protein 14 (HSPA14), found in Homo sapiens (Human).